We begin with the raw amino-acid sequence, 421 residues long: eIF5-mimic protein 1 (421 aa).

The segment at 1–24 (MNTGKQQKPVLTGQRFKTRKRDEK) is disordered. In terms of domain architecture, W2 spans 250–417 (TQQTLGTRKE…QNAEEESESE (168 aa)).

The protein belongs to the BZW family.

It is found in the cytoplasm. Functionally, translation initiation regulator which may repress non-AUG initiated translation and repeat-associated non-AUG (RAN) initiated translation by acting as a competitive inhibitor of eukaryotic translation initiation factor 5 (EIF5) function. The protein is eIF5-mimic protein 1 (bzw2) of Danio rerio (Zebrafish).